Consider the following 1051-residue polypeptide: MTLKEQSSTIDRLSKENFDLKMRIHFLNEALNRRSEEGIKEMISENVELKSDKLKLQKDNQGLKRKIRDLEKQLKDQQSDKESMLNHDPEGGSDEEDRDHAQDEELLFLRERVETYELEIERLRSESIARESEKRRLAEMLKSLNDGRPTGSDSGAREERDMWKDMLDAETAAREQADEENKRLREELMRVRSEATYAIAPAAPLRSGHRNRGDSLVSHSAVSDRELYRNTAAGSSSSSTLVMEFELLKQENAELRREVSAQTSMLTSRNREKERLYQEIEELKLGQRRDRSIAGDSILDRSASRAQGRPSSSISDRTGQSPIDDAEREDWELRNGQLRDQVSALKLENQAIRQELEELDKAYSADVEQAEEDIQTLQQERDQAMQVAEERDAAFQELRAEAQEELDALGDELDQKIEECQRLTEDLRTQDDNLRALQAEMRSASEGIIRLEEDAQNNLQRYKAVQQELEQCNEEMESLEKSLYEANSKVQRLTVQIESSQNEIAFLREEQDGDKIKIGDLESELKTYRMSLQSEKDKTKELEGRLAEERYQREVVGSKEKQEVQRIMNELNREVSAAKEECRKLKKNLSAQEIETNTWKERLTDLENNLRETLGDLTGSRSSLIANIMKLQKELESTALELESTRSTLDEKETLLRNRDALLESHGLESRKLSELLERERQARRADKQSFEQALKSHHQASRTITQNNSRILELENARNQDRKRFTSLEQQFREQLNERNSMLLTIWKRLSGMCGPDWAHSNSLINGNLPSQEVIGNILFWPGFSRNLLLAVKTLENVISSFKTRVKDVERNLTKQYQTLEHAFSLRIKKLDRLEETTMNMRAQLQTRNQTGLSPELSKLRGENRLLKAELNLLQNHPRSRSTTAGVAGSPQSSTIDLAERGSLVRANTAAESPARSSIPQPAQMTNLAEPTGAVTRPRQFKPSDNHGNQEVWIKRLHELERRLKAEREARLLDRNGARRRLEERDAENKRLRAQLDRQRLRQGVSTETSTDDGGHGPPSEPTTGDEGYREREEEHSSSEGEGITVDIEV.

2 coiled-coil regions span residues 10–200 (IDRL…YAIA) and 239–285 (STLV…ELKL). A compositionally biased stretch (basic and acidic residues) spans 58–90 (KDNQGLKRKIRDLEKQLKDQQSDKESMLNHDPE). Disordered regions lie at residues 58-100 (KDNQ…DRDH) and 141-160 (LKSL…REER). Residues 294 to 303 (AGDSILDRSA) show a composition bias toward basic and acidic residues. 4 disordered regions span residues 294-329 (AGDS…AERE), 877-902 (NHPR…LAER), 909-928 (NTAA…QMTN), and 984-1051 (EERD…DIEV). Over residues 309 to 321 (RPSSSISDRTGQS) the composition is skewed to polar residues. Coiled coils occupy residues 325–743 (DAER…RNSM) and 787–878 (RNLL…LQNH). 2 stretches are compositionally biased toward polar residues: residues 877–897 (NHPR…SSTI) and 916–928 (ARSS…QMTN). The stretch at 950-1004 (NQEVWIKRLHELERRLKAEREARLLDRNGARRRLEERDAENKRLRAQLDRQRLRQ) forms a coiled coil. Basic and acidic residues-rich tracts occupy residues 984 to 1001 (EERD…DRQR) and 1028 to 1040 (EGYR…HSSS).

Its subcellular location is the cytoplasm. Its function is as follows. Involved in regulation of nuclear migration. May be involved in regulating nuclear positioning. This chain is Anucleate primary sterigmata protein B (apsB), found in Emericella nidulans (strain FGSC A4 / ATCC 38163 / CBS 112.46 / NRRL 194 / M139) (Aspergillus nidulans).